We begin with the raw amino-acid sequence, 154 residues long: Ribonuclease H (154 aa).

One can recognise an RNase H type-1 domain in the interval Met1–Ser142. Residues Asp9, Glu47, Asp69, and Asp134 each coordinate Mg(2+).

The protein belongs to the RNase H family. As to quaternary structure, monomer. The cofactor is Mg(2+).

It localises to the cytoplasm. The catalysed reaction is Endonucleolytic cleavage to 5'-phosphomonoester.. Endonuclease that specifically degrades the RNA of RNA-DNA hybrids. This chain is Ribonuclease H, found in Oleidesulfovibrio alaskensis (strain ATCC BAA-1058 / DSM 17464 / G20) (Desulfovibrio alaskensis).